Reading from the N-terminus, the 37-residue chain is Photosystem I reaction center subunit VIII (37 aa).

Residues 10–30 (IFVPLVGLVFPAIAMASLSLY) form a helical membrane-spanning segment.

Belongs to the PsaI family.

It localises to the plastid. The protein resides in the chloroplast thylakoid membrane. Functionally, may help in the organization of the PsaL subunit. This chain is Photosystem I reaction center subunit VIII, found in Gossypium barbadense (Sea Island cotton).